We begin with the raw amino-acid sequence, 207 residues long: Guanylate kinase (207 aa).

The 181-residue stretch at 4–184 folds into the Guanylate kinase-like domain; the sequence is GTLYIVSAPS…ALMDFKAIIR (181 aa). 11-18 serves as a coordination point for ATP; that stretch reads APSGAGKS.

Belongs to the guanylate kinase family.

The protein resides in the cytoplasm. It catalyses the reaction GMP + ATP = GDP + ADP. The enzyme catalyses dZMP + ATP = dZDP + ADP. It participates in purine metabolism. Essential for recycling GMP and indirectly, cGMP. Its function is as follows. (Microbial infection) Catalyzes the phosphorylation of dZMP to dZDP, when the bacterium is infected by a phage that produces the substrate for the synthesis of dZTP (2- amino-2'-deoxyadenosine 5'-triphosphate), which is then used by the phage as a DNA polymerase substrate. The polypeptide is Guanylate kinase (gmk) (Vibrio cholerae serotype O1 (strain ATCC 39315 / El Tor Inaba N16961)).